Here is a 555-residue protein sequence, read N- to C-terminus: Protein tyrosine phosphatase-like protein egg-3 (555 aa).

2 short sequence motifs (D-box) span residues 96 to 99 and 130 to 133; these read RILL and RDRL. In terms of domain architecture, Tyrosine-protein phosphatase spans 207–514; sequence FVQEFNRLDR…LFIYRVILRW (308 aa). The short motif at 253 to 256 is the RXXL motif; required for cortical localization element; the sequence is RVKL. The RXXL motif signature appears at 266 to 269; it reads RNEL. 2 consecutive short sequence motifs (RXXL motif; required for cortical localization) follow at residues 509–512 and 525–528; these read RVIL and RAAL.

The protein belongs to the protein-tyrosine phosphatase family. Part of a complex, consisting of pseudophosphatases egg-3, egg-4, egg-5 and kinase mbk-2; this complex is required for the oocyte-to-zygote transition. Interacts (via tyrosine-protein phosphatase domain) with kinase mbk-2 (via N-terminus); the interaction does not affect mbk-2 kinase activity, is enhanced by mbk-2 tyrosine phosphorylation status and requires prior binding of mbk-2 to egg-4 and egg-5. Interacts with egg-4.

The protein localises to the cytoplasm. Its subcellular location is the cell cortex. Functionally, probable pseudophosphatase required for the oocyte-to-zygote transition during which it regulates the polarized dispersal of the cortical actin cytoskeleton, the synthesis of the eggshell chitin layer and the formation of the polar bodies after meiosis I and II. Acts as a scaffold to tether kinase mbk-2 and pseudophosphatases egg-4 and egg-5 to the oocyte cortex and thus restricts mbk-2 activity to the cortex during meiosis I. Regulates mbk-2 localization to cytoplasmic foci during meiosis II. Also required for chitin synthase chs-1 localization to the cell cortex of unfertilized oocytes and to cytoplasmic foci in the fertilized embryo. The sequence is that of Protein tyrosine phosphatase-like protein egg-3 from Caenorhabditis elegans.